The following is a 311-amino-acid chain: Homeobox-leucine zipper protein HOX1 (311 aa).

2 disordered regions span residues 29–69 (AGGA…SDHR) and 97–160 (AETT…KKLR). The span at 119–145 (SSPNSTLSSLSGKRGAPSAATAAAAAA) shows a compositional bias: low complexity. Positions 154-213 (GSRKKLRLSKDQAAVLEDTFKEHNTLNPKQKAALARQLNLKPRQVEVWFQNRRARTKLKQ) form a DNA-binding region, homeobox. The segment at 212–256 (KQTEVDCELLKRCCETLTDENRRLHRELQELRALKLATAAAAPHH) is leucine-zipper. Residues 279 to 311 (SAATTTRNNSGAAPARPVPTRPWPPAAAQRSSA) form a disordered region. Residues 280–289 (AATTTRNNSG) are compositionally biased toward polar residues. Positions 294–303 (RPVPTRPWPP) are enriched in pro residues.

Belongs to the HD-ZIP homeobox family. Class II subfamily. As to quaternary structure, homodimer. May form a heterodimer with HOX2, HOX3 or HOX7. In terms of tissue distribution, expressed in root provascular and vascular cylinder, provascular and vascular strands of leaves, provascular and vascular strands of the whole panicle, in mature embryo provascular bundles of scutellum and embryonic axis and provascular and vascular strands of young immature spikelet organs. Expressed in differentiating and differentiated xylem and phloem elements, and in outer and inner bundle sheath cells of all vascular bundles. Expressed in auricles, ligules, culm, guard cells brac hairs and pollen.

The protein localises to the nucleus. In terms of biological role, probable transcription repressor involved leaf development. Binds to the DNA sequence 5'-CAAT[GC]ATTG-3'. May act as a regulatory switch to specify provascular cell fate. This chain is Homeobox-leucine zipper protein HOX1 (HOX1), found in Oryza sativa subsp. japonica (Rice).